Reading from the N-terminus, the 461-residue chain is UDP-N-acetylmuramoylalanine--D-glutamate ligase (461 aa).

Position 115–121 (115–121 (GSNGKTT)) interacts with ATP.

It belongs to the MurCDEF family.

It localises to the cytoplasm. The catalysed reaction is UDP-N-acetyl-alpha-D-muramoyl-L-alanine + D-glutamate + ATP = UDP-N-acetyl-alpha-D-muramoyl-L-alanyl-D-glutamate + ADP + phosphate + H(+). It participates in cell wall biogenesis; peptidoglycan biosynthesis. In terms of biological role, cell wall formation. Catalyzes the addition of glutamate to the nucleotide precursor UDP-N-acetylmuramoyl-L-alanine (UMA). The chain is UDP-N-acetylmuramoylalanine--D-glutamate ligase from Acidobacterium capsulatum (strain ATCC 51196 / DSM 11244 / BCRC 80197 / JCM 7670 / NBRC 15755 / NCIMB 13165 / 161).